The chain runs to 148 residues: Nucleoside diphosphate kinase (148 aa).

6 residues coordinate ATP: Lys9, Phe57, Arg85, Thr91, Arg102, and Asn112. A Phosphothreonine modification is found at Thr91. His115 acts as the Pros-phosphohistidine intermediate in catalysis. Ser122 bears the Phosphoserine mark.

It belongs to the NDK family. In terms of assembly, homotetramer. It depends on Mg(2+) as a cofactor.

It localises to the cytoplasm. The catalysed reaction is a 2'-deoxyribonucleoside 5'-diphosphate + ATP = a 2'-deoxyribonucleoside 5'-triphosphate + ADP. The enzyme catalyses a ribonucleoside 5'-diphosphate + ATP = a ribonucleoside 5'-triphosphate + ADP. Its function is as follows. Major role in the synthesis of nucleoside triphosphates other than ATP. The ATP gamma phosphate is transferred to the NDP beta phosphate via a ping-pong mechanism, using a phosphorylated active-site intermediate. The chain is Nucleoside diphosphate kinase from Oceanobacillus iheyensis (strain DSM 14371 / CIP 107618 / JCM 11309 / KCTC 3954 / HTE831).